The sequence spans 244 residues: tRNA pseudouridine synthase A (244 aa).

The Nucleophile role is filled by Asp-52. Residue Tyr-111 coordinates substrate.

It belongs to the tRNA pseudouridine synthase TruA family. Homodimer.

The catalysed reaction is uridine(38/39/40) in tRNA = pseudouridine(38/39/40) in tRNA. Its function is as follows. Formation of pseudouridine at positions 38, 39 and 40 in the anticodon stem and loop of transfer RNAs. The protein is tRNA pseudouridine synthase A of Thermosipho africanus (strain TCF52B).